A 1517-amino-acid polypeptide reads, in one-letter code: DNA-directed RNA polymerase subunit beta' (1517 aa).

Positions 71, 73, 86, and 89 each coordinate Zn(2+). The Mg(2+) site is built by aspartate 482, aspartate 484, and aspartate 486. Positions 812, 886, 893, and 896 each coordinate Zn(2+).

This sequence belongs to the RNA polymerase beta' chain family. In terms of assembly, the RNAP catalytic core consists of 2 alpha, 1 beta, 1 beta' and 1 omega subunit. When a sigma factor is associated with the core the holoenzyme is formed, which can initiate transcription. Mg(2+) is required as a cofactor. Requires Zn(2+) as cofactor.

The enzyme catalyses RNA(n) + a ribonucleoside 5'-triphosphate = RNA(n+1) + diphosphate. DNA-dependent RNA polymerase catalyzes the transcription of DNA into RNA using the four ribonucleoside triphosphates as substrates. This chain is DNA-directed RNA polymerase subunit beta', found in Campylobacter jejuni (strain RM1221).